The following is a 536-amino-acid chain: Lysosomal acid glucosylceramidase (536 aa).

The N-terminal stretch at 1 to 39 (MEFSSPSREECPKPSGRVNIMAGSLTGLLLLQAVSWASG) is a signal peptide. 2 cysteine pairs are disulfide-bonded: C43–C55 and C57–C62. 3 N-linked (GlcNAc...) asparagine glycosylation sites follow: N58, N98, and N185. The active-site Proton donor is E274. N309 is a glycosylation site (N-linked (GlcNAc...) asparagine). E379 (nucleophile) is an active-site residue. N501 is a glycosylation site (N-linked (GlcNAc...) asparagine).

It belongs to the glycosyl hydrolase 30 family. In terms of assembly, interacts with saposin-C. Interacts with SCARB2. Interacts with TCP1. Interacts with GRN; this interaction prevents aggregation of GBA1-SCARB2 complex via interaction with HSPA1A upon stress.

It is found in the lysosome membrane. The catalysed reaction is a beta-D-glucosyl-(1&lt;-&gt;1')-N-acylsphing-4-enine + H2O = an N-acylsphing-4-enine + D-glucose. The enzyme catalyses a beta-D-galactosyl-(1&lt;-&gt;1')-N-acylsphing-4-enine + H2O = an N-acylsphing-4-enine + D-galactose. It catalyses the reaction cholesteryl 3-beta-D-glucoside + H2O = cholesterol + D-glucose. It carries out the reaction a beta-D-glucosyl-(1&lt;-&gt;1')-N-acylsphing-4-enine + cholesterol = cholesteryl 3-beta-D-glucoside + an N-acylsphing-4-enine. The catalysed reaction is beta-D-glucosyl-N-(9Z-octadecenoyl)-sphing-4E-enine + cholesterol = N-(9Z-octadecenoyl)-sphing-4-enine + cholesteryl 3-beta-D-glucoside. The enzyme catalyses beta-D-glucosyl-N-octanoylsphing-4E-enine + cholesterol = N-octanoylsphing-4-enine + cholesteryl 3-beta-D-glucoside. It catalyses the reaction beta-D-glucosyl-N-dodecanoylsphing-4-enine + cholesterol = N-dodecanoylsphing-4-enine + cholesteryl 3-beta-D-glucoside. It carries out the reaction beta-D-glucosyl-(1&lt;-&gt;1)-N-octadecanoylsphing-4-enine + cholesterol = N-octadecanoylsphing-4-enine + cholesteryl 3-beta-D-glucoside. The catalysed reaction is beta-D-glucosyl-(1&lt;-&gt;1')-N-(15Z-tetracosenoyl)-sphing-4-enine + cholesterol = N-(15Z-tetracosenoyl)-sphing-4-enine + cholesteryl 3-beta-D-glucoside. The enzyme catalyses a beta-D-galactosyl-(1&lt;-&gt;1')-N-acylsphing-4-enine + cholesterol = cholesteryl 3-beta-D-galactoside + an N-acylsphing-4-enine. It catalyses the reaction 1-(beta-D-galactosyl)-N-dodecanoylsphing-4-enine + cholesterol = cholesteryl 3-beta-D-galactoside + N-dodecanoylsphing-4-enine. It carries out the reaction a beta-D-xylosyl-(1&lt;-&gt;1')-N-acylsphing-4-enine + cholesterol = cholesteryl 3-beta-D-xyloside + an N-acylsphing-4-enine. The catalysed reaction is beta-D-xylosyl-(1&lt;-&gt;1')-N-(9Z-octadecenoyl)-sphing-4-enine + cholesterol = cholesteryl 3-beta-D-xyloside + N-(9Z-octadecenoyl)-sphing-4-enine. The protein operates within steroid metabolism; cholesterol metabolism. It functions in the pathway sphingolipid metabolism. Glucosylceramidase that catalyzes, within the lysosomal compartment, the hydrolysis of glucosylceramides/GlcCers (such as beta-D-glucosyl-(1&lt;-&gt;1')-N-acylsphing-4-enine) into free ceramides (such as N-acylsphing-4-enine) and glucose. Plays a central role in the degradation of complex lipids and the turnover of cellular membranes. Through the production of ceramides, participates in the PKC-activated salvage pathway of ceramide formation. Catalyzes the glucosylation of cholesterol, through a transglucosylation reaction where glucose is transferred from GlcCer to cholesterol. GlcCer containing mono-unsaturated fatty acids (such as beta-D-glucosyl-N-(9Z-octadecenoyl)-sphing-4-enine) are preferred as glucose donors for cholesterol glucosylation when compared with GlcCer containing same chain length of saturated fatty acids (such as beta-D-glucosyl-N-octadecanoyl-sphing-4-enine). Under specific conditions, may alternatively catalyze the reverse reaction, transferring glucose from cholesteryl 3-beta-D-glucoside to ceramide. Can also hydrolyze cholesteryl 3-beta-D-glucoside producing glucose and cholesterol. Catalyzes the hydrolysis of galactosylceramides/GalCers (such as beta-D-galactosyl-(1&lt;-&gt;1')-N-acylsphing-4-enine), as well as the transfer of galactose between GalCers and cholesterol in vitro, but with lower activity than with GlcCers. Contrary to GlcCer and GalCer, xylosylceramide/XylCer (such as beta-D-xyosyl-(1&lt;-&gt;1')-N-acylsphing-4-enine) is not a good substrate for hydrolysis, however it is a good xylose donor for transxylosylation activity to form cholesteryl 3-beta-D-xyloside. This chain is Lysosomal acid glucosylceramidase (GBA1), found in Pongo abelii (Sumatran orangutan).